A 215-amino-acid chain; its full sequence is Adenylate kinase (215 aa).

Residue Gly-10–Thr-15 participates in ATP binding. The interval Ser-30–Val-59 is NMP. Residues Thr-31, Arg-36, Gln-57 to Val-59, Gly-85 to Arg-88, and Gln-92 contribute to the AMP site. An LID region spans residues Gly-126–Asp-162. Arg-127 contributes to the ATP binding site. Residues Cys-130 and Cys-132 each coordinate Zn(2+). Residue Ser-135–Tyr-136 participates in ATP binding. Positions 149 and 152 each coordinate Zn(2+). Residues Arg-159 and Arg-170 each contribute to the AMP site. Gly-198 serves as a coordination point for ATP.

This sequence belongs to the adenylate kinase family. As to quaternary structure, monomer.

It localises to the cytoplasm. It catalyses the reaction AMP + ATP = 2 ADP. It functions in the pathway purine metabolism; AMP biosynthesis via salvage pathway; AMP from ADP: step 1/1. Catalyzes the reversible transfer of the terminal phosphate group between ATP and AMP. Plays an important role in cellular energy homeostasis and in adenine nucleotide metabolism. This chain is Adenylate kinase, found in Methanothrix thermoacetophila (strain DSM 6194 / JCM 14653 / NBRC 101360 / PT) (Methanosaeta thermophila).